A 158-amino-acid polypeptide reads, in one-letter code: UPF0336 protein Mb0654 (158 aa).

It belongs to the UPF0336 family.

The chain is UPF0336 protein Mb0654 from Mycobacterium bovis (strain ATCC BAA-935 / AF2122/97).